The sequence spans 332 residues: Melanocortin receptor 4 (332 aa).

Topologically, residues 1 to 43 (MNSTHHHGMYTSLHLWNRSSHGLHGNASESLGKGHSDGGCYEQ) are extracellular. Residues Asn2, Asn17, and Asn26 are each glycosylated (N-linked (GlcNAc...) asparagine). 2 disulfides stabilise this stretch: Cys40-Cys279 and Cys271-Cys277. A helical membrane pass occupies residues 44 to 69 (LFVSPEVFVTLGVISLLENILVIVAI). The Cytoplasmic segment spans residues 70–81 (AKNKNLHSPMYF). A helical membrane pass occupies residues 82 to 106 (FICSLAVADMLVSVSNGSETIVITL). Ca(2+) is bound by residues Glu100, Asp122, and Asp126. Residues 107–123 (LNSTDTDAQSFTVNIDN) are Extracellular-facing. Residues 124–145 (VIDSVICSSLLASICSLLSIAV) form a helical membrane-spanning segment. The Cytoplasmic portion of the chain corresponds to 146–165 (DRYFTIFYALQYHNIMTVRR). A helical membrane pass occupies residues 166 to 186 (VGIIISCIWAACTVSGVLFII). At 187 to 191 (YSDSS) the chain is on the extracellular side. A helical membrane pass occupies residues 192–215 (AVIICLITMFFTMLVLMASLYVHM). Residues 216–248 (FLMARLHIKRIAVLPGTGTIRQGANMKGAITLT) lie on the Cytoplasmic side of the membrane. A helical transmembrane segment spans residues 249–271 (ILIGVFVVCWAPFFLHLLFYISC). Residues 272-280 (PQNPYCVCF) are Extracellular-facing. Residues 281-304 (MSHFNLYLILIMCNAVIDPLIYAL) form a helical membrane-spanning segment. Residues 305–332 (RSQELRKTFKEIICFYPLGGICELPGRY) are Cytoplasmic-facing. Cys318 is lipidated: S-palmitoyl cysteine.

The protein belongs to the G-protein coupled receptor 1 family. In terms of assembly, homodimer; disulfide-linked, also forms higher order oligomers. Interacts with GNAS. Interacts with ATRNL1. Interacts with MGRN1; this interaction competes with GNAS-binding and thus inhibits agonist-induced cAMP production. Interacts with MRAP and MRAP2; these associated factors increase ligand-sensitivity and generation of cAMP. Brain, enriched in the striatum, nucleus accumbens, and periaqueductal gray.

Its subcellular location is the cell membrane. In terms of biological role, hormone receptor that acts as a key component of the leptin-melanocortin pathway at the intersection of homeostatic maintenance of energetic state. Plays a role in regulating food intake: activation by a stimulating hormone such as anorexigenic alpha-melanocyte stimulating hormone (alpha-MSH) inhibits appetite, whereas binding to a natural antagonist like Agouti-related protein/AGRP promotes appetite. G-protein-coupled receptor that activates conventional Galphas signaling leading to induction of anorexogenic signaling in the hypothalamus to result in negative energy balance. Regulates the firing activity of neurons from the hypothalamus by alpha-MSH and AGRP independently of Galphas signaling by ligand-induced coupling of closure of inwardly rectifying potassium channel KCNJ13. In intestinal epithelial cells, plays a role in the inhibition of hepatic glucose production via nesfatin-1/NUCB2 leading to increased cyclic adenosine monophosphate (cAMP) levels and glucagon-like peptide 1 (GLP-1) secretion in the intestinal epithelium. In Rattus norvegicus (Rat), this protein is Melanocortin receptor 4 (Mc4r).